Consider the following 350-residue polypeptide: Methionine import ATP-binding protein MetN (350 aa).

The ABC transporter domain occupies isoleucine 2–valine 241. Glycine 38 to serine 45 provides a ligand contact to ATP.

It belongs to the ABC transporter superfamily. Methionine importer (TC 3.A.1.24) family. As to quaternary structure, the complex is composed of two ATP-binding proteins (MetN), two transmembrane proteins (MetI) and a solute-binding protein (MetQ).

It is found in the cell inner membrane. The enzyme catalyses L-methionine(out) + ATP + H2O = L-methionine(in) + ADP + phosphate + H(+). It catalyses the reaction D-methionine(out) + ATP + H2O = D-methionine(in) + ADP + phosphate + H(+). In terms of biological role, part of the ABC transporter complex MetNIQ involved in methionine import. Responsible for energy coupling to the transport system. The sequence is that of Methionine import ATP-binding protein MetN from Francisella tularensis subsp. tularensis (strain FSC 198).